Here is a 737-residue protein sequence, read N- to C-terminus: Protein bicaudal D homolog (737 aa).

3 coiled-coil regions span residues 1 to 255 (MAES…RNAE), 292 to 319 (GSSD…EKIF), and 547 to 684 (AENE…DRDR). Positions 72 to 97 (YRSQHQRSTRSELENEESLLEESSAK) are disordered. A disordered region spans residues 686-737 (VFKRSSTRAPTRETYQPPRAVRYPGSTTTAQQPAPSSSGGSRGGPRRGDNQQ). Residues 710–719 (GSTTTAQQPA) show a composition bias toward polar residues.

The protein belongs to the BicD family. Component of a dynein-regulating complex composed of at least bicd-1, dlc-1 and egal-1. Interacts with egal-1 and unc-83. In terms of tissue distribution, expressed in the excretory cell, body wall muscles, vulval muscle cells, PVD and FLP sensory neurons and AVF interneurons.

The protein resides in the nucleus envelope. The protein localises to the perikaryon. Its subcellular location is the cell projection. It localises to the dendrite. In terms of biological role, part of a complex with dlc-1 and egal-1, which is recruited to the nuclear envelope by unc-83, where in turn, it recruits dynein to the nuclear surface and regulates nuclear migration in hypodermal precursor cells. Required for the formation of dendritic branches of PVD sensory neurons. This chain is Protein bicaudal D homolog, found in Caenorhabditis elegans.